We begin with the raw amino-acid sequence, 126 residues long: Large ribosomal subunit protein bL17 (126 aa).

This sequence belongs to the bacterial ribosomal protein bL17 family. In terms of assembly, part of the 50S ribosomal subunit. Contacts protein L32.

The protein is Large ribosomal subunit protein bL17 of Xylella fastidiosa (strain Temecula1 / ATCC 700964).